Reading from the N-terminus, the 251-residue chain is Pyrroloquinoline-quinone synthase (251 aa).

Belongs to the PqqC family.

The enzyme catalyses 6-(2-amino-2-carboxyethyl)-7,8-dioxo-1,2,3,4,7,8-hexahydroquinoline-2,4-dicarboxylate + 3 O2 = pyrroloquinoline quinone + 2 H2O2 + 2 H2O + H(+). It participates in cofactor biosynthesis; pyrroloquinoline quinone biosynthesis. Its function is as follows. Ring cyclization and eight-electron oxidation of 3a-(2-amino-2-carboxyethyl)-4,5-dioxo-4,5,6,7,8,9-hexahydroquinoline-7,9-dicarboxylic-acid to PQQ. This Pseudomonas entomophila (strain L48) protein is Pyrroloquinoline-quinone synthase.